A 463-amino-acid polypeptide reads, in one-letter code: MDITPFLNRTLDIPLYQQLYRYFKENMHRGRIQKGMKLPSKRLLANQLSISQTTVERAYEQLAAEGYIVSKPRSGWFADYHDSDFAYDRMPSTTPIQQEAEENKQWIDFHYGNVDSSYFPFSAWRKSMVNSLDQYGHELYRPGHVLGEFELRTLIAEYLYQSRGVHCGPEQVIIGAGNPILLQILCQVFEPNISIGYEDPGYPRARKIFEANRMNIVPIPVDDEGICIQKIKEQQPNLVYVTPSHQFTLGTIMTINRRIQLLKWAAENQSFIIEDDYDGEFRYTGQPVPSLQGLDQHNRVIYMGTFSKSLLPSLRISYMILPSPLLKKGHEITSLYKQTVSCHSQLTLAEFIKNGEWQKHINRMRKLYRKKRAIVLEAVQRELGEHVRIRGENSGLRILLDVYLPFGEKELIEKAKKHGVKIYPVSLSYQHHPPTKTVSLGFAGVSESDIREGIKKLKAAWKI.

An HTH gntR-type domain is found at Ile13 to His81. Positions Lys41–Glu60 form a DNA-binding region, H-T-H motif. Lys308 carries the N6-(pyridoxal phosphate)lysine modification.

It in the C-terminal section; belongs to the class-I pyridoxal-phosphate-dependent aminotransferase family. Requires pyridoxal 5'-phosphate as cofactor.

This is an uncharacterized protein from Bacillus subtilis (strain 168).